We begin with the raw amino-acid sequence, 142 residues long: Hemoglobin subunit alpha (142 aa).

The 141-residue stretch at 2 to 142 folds into the Globin domain; sequence VLSPADKSNV…VSTVLTSKYR (141 aa). Residue Ser-4 is modified to Phosphoserine. N6-succinyllysine occurs at positions 8 and 12. Lys-17 bears the N6-acetyllysine; alternate mark. N6-succinyllysine; alternate is present on Lys-17. Position 25 is a phosphotyrosine (Tyr-25). Ser-36 carries the phosphoserine modification. Lys-41 is subject to N6-succinyllysine. A Phosphoserine modification is found at Ser-50. His-59 lines the O2 pocket. His-88 is a binding site for heme b. The residue at position 103 (Ser-103) is a Phosphoserine. At Thr-109 the chain carries Phosphothreonine. 2 positions are modified to phosphoserine: Ser-125 and Ser-132. Phosphothreonine occurs at positions 135 and 138. At Ser-139 the chain carries Phosphoserine.

The protein belongs to the globin family. Heterotetramer of two alpha chains and two beta chains. As to expression, red blood cells.

In terms of biological role, involved in oxygen transport from the lung to the various peripheral tissues. Functionally, hemopressin acts as an antagonist peptide of the cannabinoid receptor CNR1. Hemopressin-binding efficiently blocks cannabinoid receptor CNR1 and subsequent signaling. This is Hemoglobin subunit alpha (HBA) from Macaca fuscata fuscata (Japanese macaque).